The chain runs to 515 residues: Bifunctional purine biosynthesis protein PurH (515 aa).

An MGS-like domain is found at 1–145 (MTKRALISVS…KNHASVTVVV (145 aa)).

It belongs to the PurH family.

It catalyses the reaction (6R)-10-formyltetrahydrofolate + 5-amino-1-(5-phospho-beta-D-ribosyl)imidazole-4-carboxamide = 5-formamido-1-(5-phospho-D-ribosyl)imidazole-4-carboxamide + (6S)-5,6,7,8-tetrahydrofolate. The catalysed reaction is IMP + H2O = 5-formamido-1-(5-phospho-D-ribosyl)imidazole-4-carboxamide. It functions in the pathway purine metabolism; IMP biosynthesis via de novo pathway; 5-formamido-1-(5-phospho-D-ribosyl)imidazole-4-carboxamide from 5-amino-1-(5-phospho-D-ribosyl)imidazole-4-carboxamide (10-formyl THF route): step 1/1. It participates in purine metabolism; IMP biosynthesis via de novo pathway; IMP from 5-formamido-1-(5-phospho-D-ribosyl)imidazole-4-carboxamide: step 1/1. This chain is Bifunctional purine biosynthesis protein PurH, found in Streptococcus thermophilus (strain ATCC BAA-491 / LMD-9).